A 157-amino-acid polypeptide reads, in one-letter code: NAD(P)H-quinone oxidoreductase subunit N (157 aa).

This sequence belongs to the complex I NdhN subunit family. In terms of assembly, NDH-1 can be composed of about 15 different subunits; different subcomplexes with different compositions have been identified which probably have different functions.

It is found in the cellular thylakoid membrane. The catalysed reaction is a plastoquinone + NADH + (n+1) H(+)(in) = a plastoquinol + NAD(+) + n H(+)(out). The enzyme catalyses a plastoquinone + NADPH + (n+1) H(+)(in) = a plastoquinol + NADP(+) + n H(+)(out). Functionally, NDH-1 shuttles electrons from an unknown electron donor, via FMN and iron-sulfur (Fe-S) centers, to quinones in the respiratory and/or the photosynthetic chain. The immediate electron acceptor for the enzyme in this species is believed to be plastoquinone. Couples the redox reaction to proton translocation, and thus conserves the redox energy in a proton gradient. Cyanobacterial NDH-1 also plays a role in inorganic carbon-concentration. The protein is NAD(P)H-quinone oxidoreductase subunit N of Picosynechococcus sp. (strain ATCC 27264 / PCC 7002 / PR-6) (Agmenellum quadruplicatum).